Here is a 278-residue protein sequence, read N- to C-terminus: Release factor glutamine methyltransferase (278 aa).

S-adenosyl-L-methionine contacts are provided by residues 117 to 121, aspartate 140, and asparagine 184; that span reads GTGSG. 184 to 187 is a binding site for substrate; it reads NPPY.

This sequence belongs to the protein N5-glutamine methyltransferase family. PrmC subfamily.

It carries out the reaction L-glutaminyl-[peptide chain release factor] + S-adenosyl-L-methionine = N(5)-methyl-L-glutaminyl-[peptide chain release factor] + S-adenosyl-L-homocysteine + H(+). In terms of biological role, methylates the class 1 translation termination release factors RF1/PrfA and RF2/PrfB on the glutamine residue of the universally conserved GGQ motif. This Staphylococcus aureus (strain NCTC 8325 / PS 47) protein is Release factor glutamine methyltransferase.